We begin with the raw amino-acid sequence, 411 residues long: Citrate synthase (411 aa).

Active-site residues include histidine 304 and aspartate 363.

It belongs to the citrate synthase family.

The catalysed reaction is oxaloacetate + acetyl-CoA + H2O = citrate + CoA + H(+). Its pathway is carbohydrate metabolism; tricarboxylic acid cycle; isocitrate from oxaloacetate: step 1/2. This is Citrate synthase (gltA) from Rickettsia canadensis.